A 132-amino-acid polypeptide reads, in one-letter code: Agouti-signaling protein (132 aa).

The N-terminal stretch at Met1–Ser22 is a signal peptide. Asn39 carries N-linked (GlcNAc...) asparagine glycosylation. Residues Ile62 to Pro85 form a disordered region. The segment covering Lys65–Met79 has biased composition (basic and acidic residues). 5 disulfide bridges follow: Cys93–Cys108, Cys100–Cys114, Cys107–Cys125, Cys111–Cys132, and Cys116–Cys123. In terms of domain architecture, Agouti spans Cys93–Cys132.

Widely expressed at low levels. Highly expressed in the skin. Expressed in adipose tissue.

The protein localises to the secreted. Its function is as follows. Involved in the regulation of melanogenesis. The binding of ASP to MC1R precludes alpha-MSH initiated signaling and thus blocks production of cAMP, leading to a down-regulation of eumelanogenesis (brown/black pigment) and thus increasing synthesis of pheomelanin (yellow/red pigment). In higher primates, agouti may affect the quality of hair pigmentation rather than its pattern of deposition. Could well play a role in neuroendocrine aspects of melanocortin action. May have some functional role in regulating the lipid metabolism with adipocytes. The sequence is that of Agouti-signaling protein (ASIP) from Homo sapiens (Human).